The sequence spans 268 residues: Early nodulin-20 (268 aa).

The N-terminal stretch at 1-24 (MSSSSPILLMFIFSIWMLISYSES) is a signal peptide. The Phytocyanin domain occupies 25–129 (TDYLVGDSEN…GLKLAVVVMV (105 aa)). Residue Asn-67 is glycosylated (N-linked (GlcNAc...) asparagine). The cysteines at positions 83 and 117 are disulfide-linked. Pro residues-rich tracts occupy residues 134–145 (SSPPPPPSPPTP) and 160–185 (PSPPSPSPSPSPSPSPSPSPRSTPIP). The tract at residues 134-253 (SSPPPPPSPP…SGSKGGGAGH (120 aa)) is disordered. Residues 199–235 (PSLSKSPSPSESPSLAPSPSDSVASLAPSSSPSDESP) are compositionally biased toward low complexity. Residue Ser-243 is the site of GPI-anchor amidated serine attachment. Positions 244-268 (SGSKGGGAGHGFLEVSIAMMMFLIF) are cleaved as a propeptide — removed in mature form.

Belongs to the early nodulin-like (ENODL) family.

It is found in the cell membrane. Its function is as follows. May act as a carbohydrate transporter. The chain is Early nodulin-20 from Medicago truncatula (Barrel medic).